The following is a 229-amino-acid chain: Uracil-DNA glycosylase (229 aa).

Catalysis depends on aspartate 64, which acts as the Proton acceptor.

Belongs to the uracil-DNA glycosylase (UDG) superfamily. UNG family.

The protein resides in the cytoplasm. The catalysed reaction is Hydrolyzes single-stranded DNA or mismatched double-stranded DNA and polynucleotides, releasing free uracil.. Functionally, excises uracil residues from the DNA which can arise as a result of misincorporation of dUMP residues by DNA polymerase or due to deamination of cytosine. The polypeptide is Uracil-DNA glycosylase (Escherichia coli O7:K1 (strain IAI39 / ExPEC)).